A 463-amino-acid polypeptide reads, in one-letter code: UDP-N-acetylmuramoylalanine--D-glutamate ligase (463 aa).

Residue 109-115 (GTDGKST) participates in ATP binding.

This sequence belongs to the MurCDEF family.

The protein localises to the cytoplasm. It carries out the reaction UDP-N-acetyl-alpha-D-muramoyl-L-alanine + D-glutamate + ATP = UDP-N-acetyl-alpha-D-muramoyl-L-alanyl-D-glutamate + ADP + phosphate + H(+). The protein operates within cell wall biogenesis; peptidoglycan biosynthesis. Its function is as follows. Cell wall formation. Catalyzes the addition of glutamate to the nucleotide precursor UDP-N-acetylmuramoyl-L-alanine (UMA). This is UDP-N-acetylmuramoylalanine--D-glutamate ligase from Leptospira interrogans serogroup Icterohaemorrhagiae serovar copenhageni (strain Fiocruz L1-130).